We begin with the raw amino-acid sequence, 238 residues long: Pyridoxine 5'-phosphate synthase (238 aa).

N9 lines the 3-amino-2-oxopropyl phosphate pocket. 1-deoxy-D-xylulose 5-phosphate is bound at residue 11–12; the sequence is DH. R20 provides a ligand contact to 3-amino-2-oxopropyl phosphate. The Proton acceptor role is filled by H45. Residues R47 and H52 each coordinate 1-deoxy-D-xylulose 5-phosphate. E72 (proton acceptor) is an active-site residue. Position 102 (T102) interacts with 1-deoxy-D-xylulose 5-phosphate. The active-site Proton donor is the H189. 3-amino-2-oxopropyl phosphate contacts are provided by residues G190 and 211-212; that span reads GH.

The protein belongs to the PNP synthase family. Homooctamer; tetramer of dimers.

The protein localises to the cytoplasm. It catalyses the reaction 3-amino-2-oxopropyl phosphate + 1-deoxy-D-xylulose 5-phosphate = pyridoxine 5'-phosphate + phosphate + 2 H2O + H(+). It participates in cofactor biosynthesis; pyridoxine 5'-phosphate biosynthesis; pyridoxine 5'-phosphate from D-erythrose 4-phosphate: step 5/5. In terms of biological role, catalyzes the complicated ring closure reaction between the two acyclic compounds 1-deoxy-D-xylulose-5-phosphate (DXP) and 3-amino-2-oxopropyl phosphate (1-amino-acetone-3-phosphate or AAP) to form pyridoxine 5'-phosphate (PNP) and inorganic phosphate. In Ehrlichia canis (strain Jake), this protein is Pyridoxine 5'-phosphate synthase.